A 105-amino-acid polypeptide reads, in one-letter code: Antitoxin YfjZ (105 aa).

This sequence belongs to the CbeA/YafW/YfjZ antitoxin family.

Its function is as follows. Antitoxin component of a type IV toxin-antitoxin (TA) system. Antitoxin that counteracts the effect of cognate toxin YpjF. Also counteracts the effect of non-cognate toxins CbtA and YfkI. This chain is Antitoxin YfjZ (yfjZ), found in Escherichia coli (strain K12).